The primary structure comprises 123 residues: Putative iron-sulfur cluster insertion protein ErpA (123 aa).

3 residues coordinate iron-sulfur cluster: C51, C115, and C117.

It belongs to the HesB/IscA family. In terms of assembly, homodimer. The cofactor is iron-sulfur cluster.

Its function is as follows. Required for insertion of 4Fe-4S clusters. In Bordetella avium (strain 197N), this protein is Putative iron-sulfur cluster insertion protein ErpA.